The primary structure comprises 380 residues: Mitogen-activated protein kinase 3 (380 aa).

A2 is modified (N-acetylalanine). Residues 43-331 form the Protein kinase domain; that stretch reads YTQLQYIGEG…VEEALAHPYL (289 aa). ATP contacts are provided by residues 49–57 and K72; that span reads IGEGAYGMV. The active-site Proton acceptor is the D167. T199 is modified (phosphothreonine). Position 203 is a phosphothreonine; by MAP2K1 and MAP2K2 (T203). The short motif at 203 to 205 is the TXY element; it reads TEY. Y205 is modified (phosphotyrosine; by MAP2K1 and MAP2K2). T208 is modified (phosphothreonine; by autocatalysis).

Belongs to the protein kinase superfamily. CMGC Ser/Thr protein kinase family. MAP kinase subfamily. As to quaternary structure, binds both upstream activators and downstream substrates in multimolecular complexes. Found in a complex with at least BRAF, HRAS, MAP2K1/MEK1, MAPK3 and RGS14. Interacts with ADAM15, ARRB2, CANX, DAPK1 (via death domain), HSF4, IER3, MAP2K1/MEK1, MORG1, NISCH, PEA15, SGK1 and MKNK2. MKNK2 isoform 1 binding prevents from dephosphorylation and inactivation. Interacts with TPR. Interacts with HSF1 (via D domain and preferentially with hyperphosphorylated form); this interaction occurs upon heat shock. Interacts with CDKN2AIP. Interacts with CAVIN4. Interacts with GIT1; this interaction is necessary for MAPK3 localization to focal adhesions. Interacts with ZNF263. Interacts with EBF4. Mg(2+) serves as cofactor. Post-translationally, phosphorylated upon FLT3 and KIT signaling. Ligand-activated ALK induces tyrosine phosphorylation. Dephosphorylated by PTPRJ at Tyr-205. Dually phosphorylated on Thr-203 and Tyr-205, which activates the enzyme. Ubiquitinated by TRIM15 via 'Lys-63'-linked ubiquitination; leading to activation. Deubiquitinated by CYLD. In terms of tissue distribution, highest levels within the nervous system, expressed in different tissues, mostly in intestine, placenta and lung.

It localises to the cytoplasm. The protein resides in the nucleus. The protein localises to the membrane. Its subcellular location is the caveola. It is found in the cell junction. It localises to the focal adhesion. It carries out the reaction L-seryl-[protein] + ATP = O-phospho-L-seryl-[protein] + ADP + H(+). The enzyme catalyses L-threonyl-[protein] + ATP = O-phospho-L-threonyl-[protein] + ADP + H(+). Phosphorylated by MAP2K1/MEK1 and MAP2K2/MEK2 on Thr-203 and Tyr-205 in response to external stimuli like insulin or NGF. Both phosphorylations are required for activity. This phosphorylation causes dramatic conformational changes, which enable full activation and interaction of MAPK1/ERK2 with its substrates. Dephosphorylated and inactivated by DUSP3, DUSP6 and DUSP9. In terms of biological role, serine/threonine kinase which acts as an essential component of the MAP kinase signal transduction pathway. MAPK1/ERK2 and MAPK3/ERK1 are the 2 MAPKs which play an important role in the MAPK/ERK cascade. They participate also in a signaling cascade initiated by activated KIT and KITLG/SCF. Depending on the cellular context, the MAPK/ERK cascade mediates diverse biological functions such as cell growth, adhesion, survival and differentiation through the regulation of transcription, translation, cytoskeletal rearrangements. The MAPK/ERK cascade also plays a role in initiation and regulation of meiosis, mitosis, and postmitotic functions in differentiated cells by phosphorylating a number of transcription factors. About 160 substrates have already been discovered for ERKs. Many of these substrates are localized in the nucleus, and seem to participate in the regulation of transcription upon stimulation. However, other substrates are found in the cytosol as well as in other cellular organelles, and those are responsible for processes such as translation, mitosis and apoptosis. Moreover, the MAPK/ERK cascade is also involved in the regulation of the endosomal dynamics, including lysosome processing and endosome cycling through the perinuclear recycling compartment (PNRC); as well as in the fragmentation of the Golgi apparatus during mitosis. The substrates include transcription factors (such as ATF2, BCL6, ELK1, ERF, FOS, HSF4 or SPZ1), cytoskeletal elements (such as CANX, CTTN, GJA1, MAP2, MAPT, PXN, SORBS3 or STMN1), regulators of apoptosis (such as BAD, BTG2, CASP9, DAPK1, IER3, MCL1 or PPARG), regulators of translation (such as EIF4EBP1) and a variety of other signaling-related molecules (like ARHGEF2, DEPTOR, FRS2 or GRB10). Protein kinases (such as RAF1, RPS6KA1/RSK1, RPS6KA3/RSK2, RPS6KA2/RSK3, RPS6KA6/RSK4, SYK, MKNK1/MNK1, MKNK2/MNK2, RPS6KA5/MSK1, RPS6KA4/MSK2, MAPKAPK3 or MAPKAPK5) and phosphatases (such as DUSP1, DUSP4, DUSP6 or DUSP16) are other substrates which enable the propagation the MAPK/ERK signal to additional cytosolic and nuclear targets, thereby extending the specificity of the cascade. The chain is Mitogen-activated protein kinase 3 (Mapk3) from Rattus norvegicus (Rat).